A 142-amino-acid chain; its full sequence is Large ribosomal subunit protein mL42 (142 aa).

Residues 1-32 (MALAAVKWAISSRTMLKHLFPVENGALYCVGH) constitute a mitochondrion transit peptide.

Belongs to the mitochondrion-specific ribosomal protein mL42 family. As to quaternary structure, component of the mitochondrial ribosome large subunit (39S) which comprises a 16S rRNA and about 50 distinct proteins. Component of the mitochondrial ribosome small subunit (28S) which comprises a 12S rRNA and about 30 distinct proteins.

The protein localises to the mitochondrion. The polypeptide is Large ribosomal subunit protein mL42 (MRPL42) (Bos taurus (Bovine)).